Reading from the N-terminus, the 259-residue chain is Protein unc-50 homolog (259 aa).

N-acetylmethionine is present on M1. Residues M1–P82 are Cytoplasmic-facing. The residue at position 6 (S6) is a Phosphoserine. The chain crosses the membrane as a helical span at residues A83 to L103. Over D104 to L115 the chain is Lumenal. The helical transmembrane segment at W116 to I136 threads the bilayer. Residues S137–A163 are Cytoplasmic-facing. The helical transmembrane segment at F164 to L184 threads the bilayer. Over T185 to T187 the chain is Lumenal. Residues F188–V208 form a helical membrane-spanning segment. The Cytoplasmic portion of the chain corresponds to T209–T222. Residues V223 to G243 traverse the membrane as a helical segment. Topologically, residues W244–K259 are lumenal.

This sequence belongs to the unc-50 family. Present in periodontal ligament fibroblasts (at protein level).

It is found in the nucleus inner membrane. The protein resides in the golgi apparatus membrane. Functionally, involved in the cell surface expression of neuronal nicotinic receptors. Binds RNA. The protein is Protein unc-50 homolog (UNC50) of Homo sapiens (Human).